The sequence spans 202 residues: Ras-related protein RABD2b (202 aa).

GTP is bound by residues 15–23 (GDSGVGKSC), 33–40 (YLDSYIST), 63–67 (DTAGQ), 121–124 (NKND), and 151–153 (SAK). The short motif at 37-45 (YISTIGVDF) is the Effector region element. Residues 174–202 (ASQPAGGAKPPTVQIRGQPVNQQSGCCSS) form a disordered region. Polar residues predominate over residues 192–202 (PVNQQSGCCSS). 2 S-geranylgeranyl cysteine lipidation sites follow: C199 and C200.

The protein belongs to the small GTPase superfamily. Rab family.

The protein resides in the golgi apparatus. It is found in the trans-Golgi network membrane. The protein localises to the golgi apparatus membrane. In terms of biological role, protein transport. Regulator of membrane traffic from the Golgi apparatus towards the endoplasmic reticulum (ER). The polypeptide is Ras-related protein RABD2b (RABD2B) (Arabidopsis thaliana (Mouse-ear cress)).